The following is a 49-amino-acid chain: Large ribosomal subunit protein bL33B (49 aa).

The protein belongs to the bacterial ribosomal protein bL33 family.

This Geobacillus thermodenitrificans (strain NG80-2) protein is Large ribosomal subunit protein bL33B.